A 125-amino-acid polypeptide reads, in one-letter code: Large ribosomal subunit protein bL12 (125 aa).

This sequence belongs to the bacterial ribosomal protein bL12 family. As to quaternary structure, homodimer. Part of the ribosomal stalk of the 50S ribosomal subunit. Forms a multimeric L10(L12)X complex, where L10 forms an elongated spine to which 2 to 4 L12 dimers bind in a sequential fashion. Binds GTP-bound translation factors.

Its function is as follows. Forms part of the ribosomal stalk which helps the ribosome interact with GTP-bound translation factors. Is thus essential for accurate translation. This is Large ribosomal subunit protein bL12 from Methylorubrum extorquens (strain CM4 / NCIMB 13688) (Methylobacterium extorquens).